The following is a 268-amino-acid chain: Glutamate racemase (268 aa).

Residues 14–15 (DS) and 46–47 (YG) each bind substrate. Cys-78 serves as the catalytic Proton donor/acceptor. Residue 79-80 (NS) participates in substrate binding. Cys-190 (proton donor/acceptor) is an active-site residue. Substrate is bound at residue 191–192 (TH).

Belongs to the aspartate/glutamate racemases family.

It catalyses the reaction L-glutamate = D-glutamate. The protein operates within cell wall biogenesis; peptidoglycan biosynthesis. Functionally, provides the (R)-glutamate required for cell wall biosynthesis. The chain is Glutamate racemase from Treponema pallidum (strain Nichols).